Reading from the N-terminus, the 425-residue chain is MAPITTSRVEFDEIPTVVGIFSAFGLVFTVSLFAWICCQRRSAKSNKTPPYKFVHVLKGVDIYPENLSSKKKFGGDDKSEVKGKAALPNLSLHLDLEKRDLNGNFPKANPKAGSSSDLENVTPKLFTETEKEANSPESLKSSTSLTSEEKQEKLGTLFLSLEYNFEKKAFVVNIKEAQGLPAMDEQSMTSDPYIKMTILPEKKHRVKTRVLRKTLDPVFDETFTFYGIPYPHIQELSLHFTVLSFDRFSRDDVIGEVLIPLSGIELSDGKMLMTREIIKRNAKKSSGRGELLVSLCYQSTTNTLTVVVLKARHLPKSDVSGLSDPYVKVNLYHAKKRISKKKTHVKKCTPNAVFNELFVFDIPCESLEEISVEFLVLDSERGSRNEVIGRLVLGATAEGSGGGHWKEICDFPRRQIAKWHMLCDG.

Over 1 to 16 (MAPITTSRVEFDEIPT) the chain is Vesicular. The chain crosses the membrane as a helical span at residues 17–37 (VVGIFSAFGLVFTVSLFAWIC). At 38–425 (CQRRSAKSNK…IAKWHMLCDG (388 aa)) the chain is on the cytoplasmic side. Residues 127 to 147 (TETEKEANSPESLKSSTSLTS) are disordered. Ser-135 carries the phosphoserine; by MAPK8 modification. Positions 137–146 (ESLKSSTSLT) are enriched in low complexity. C2 domains follow at residues 153-274 (KLGT…MLMT) and 287-420 (GRGE…AKWH). Asp-246, Ser-249, and Asp-252 together coordinate Ca(2+).

The protein belongs to the synaptotagmin family. In terms of assembly, interacts with KIF1A; the interaction increases in presence of calcium and decreases when SYT4 is phosphorylated at Ser-135. Ca(2+) serves as cofactor. In terms of processing, phosphorylation at Ser-135 by MAPK8/JNK1 reduces interaction with KIF1A and neuronal dense core vesicles mobility. As to expression, expressed in many regions of the nervous system but is undetectable in extra neural tissues.

Its subcellular location is the cytoplasmic vesicle. It localises to the secretory vesicle. The protein resides in the neuronal dense core vesicle membrane. Its function is as follows. Synaptotagmin family member which does not bind Ca(2+). Plays a role in dendrite formation by melanocytes. In terms of biological role, synaptotagmin family member which does not bind Ca(2+). Involved in neuronal dense core vesicles (DCVs) mobility through its interaction with KIF1A. Upon increased neuronal activity, phosphorylation by MAPK8/JNK1 destabilizes the interaction with KIF1A and captures DCVs to synapses. Plays a role in dendrite formation by melanocytes. This is Synaptotagmin-4 (Syt4) from Mus musculus (Mouse).